The following is a 267-amino-acid chain: Regulatory protein RecX (267 aa).

The protein belongs to the RecX family.

The protein localises to the cytoplasm. Functionally, modulates RecA activity. The chain is Regulatory protein RecX from Staphylococcus carnosus (strain TM300).